Here is a 178-residue protein sequence, read N- to C-terminus: uncharacterized protein (178 aa).

The disordered stretch occupies residues 1-89; sequence MSAKEGSSHP…GEKKGKTEKL (89 aa). Basic and acidic residues-rich tracts occupy residues 44 to 53 and 61 to 89; these read PYQKNEKVVV and AFLH…TEKL.

This is an uncharacterized protein from Schizosaccharomyces pombe (strain 972 / ATCC 24843) (Fission yeast).